The following is a 474-amino-acid chain: E3 ubiquitin-protein ligase CBL-C (474 aa).

A 4H region spans residues 7-145 (PWGRQWEEAR…HALFPGGKYC (139 aa)). The 315-residue stretch at 7 to 321 (PWGRQWEEAR…GKTHNPDLTE (315 aa)) folds into the Cbl-PTB domain. The EF-hand-like stretch occupies residues 146-218 (GHMYQLTKAP…FEFDVFTRLF (73 aa)). Positions 199, 201, and 210 each coordinate Ca(2+). The SH2-like stretch occupies residues 219 to 321 (QPWPTLLKNW…GKTHNPDLTE (103 aa)). Residue arginine 264 coordinates 4-O-phospho-L-tyrosine. Residues 322-350 (LGQAEPQQRIHVSEEQLQLYWAMDSTFEL) are linker. Tyrosine 341 carries the post-translational modification Phosphotyrosine; by SRC. Residues 351-390 (CKICAESNKDVKIEPCGHLLCSCCLAAWQHSDSQTCPFCR) form an RING-type zinc finger. Residues 351 to 474 (CKICAESNKD…ALGPQDPAPA (124 aa)) form an interaction with RET region. Positions 409 to 474 (TAEDSGNSSD…ALGPQDPAPA (66 aa)) are disordered. The span at 432–441 (SAPPLPPRPD) shows a compositional bias: pro residues.

In terms of assembly, interacts with ubiquitin-conjugating enzyme E2 UBE2D2 and UBE2D3. Isoform 1 interacts with EGFR (tyrosine phosphorylated). Interacts with the SH3 domain proteins LYN and CRK. Interacts (via RING-type zinc finger) with TGFB1I1 (via LIM zinc-binding domain 2); the interaction is direct and enhances the E3 activity. Interacts directly with RET (inactive) and CD2AP; dissociates from RET upon RET activation by GDNF which also increases the interaction with CD2AP suggesting dissociation as CBLC:CD2AP complex. Interacts with SRC; the interaction is enhanced when SRC is phosphorylated at 'Tyr-419'. In terms of processing, phosphorylated on multiple tyrosine residues by SRC. Isoform 1, but not isoform 2, is phosphorylated on tyrosines by EGFR. Post-translationally, autoubiquitinated when phosphorylated at Tyr-341, enhanced by SRC; suggesting proteasomal degradation. Ubiquitous.

The catalysed reaction is S-ubiquitinyl-[E2 ubiquitin-conjugating enzyme]-L-cysteine + [acceptor protein]-L-lysine = [E2 ubiquitin-conjugating enzyme]-L-cysteine + N(6)-ubiquitinyl-[acceptor protein]-L-lysine.. Its activity is regulated as follows. Phosphorylation at Tyr-341 is necessary and sufficient for the activation of E3 activity. In terms of biological role, acts as an E3 ubiquitin-protein ligase, which accepts ubiquitin from specific E2 ubiquitin-conjugating enzymes, and then transfers it to substrates promoting their degradation by the proteasome. Functionally coupled with the E2 ubiquitin-protein ligases UB2D1, UB2D2 and UB2D3. Regulator of EGFR mediated signal transduction; upon EGF activation, ubiquitinates EGFR. Isoform 1, but not isoform 2, inhibits EGF stimulated MAPK1 activation. Promotes ubiquitination of SRC phosphorylated at 'Tyr-419'. In collaboration with CD2AP may act as regulatory checkpoint for Ret signaling by modulating the rate of RET degradation after ligand activation; CD2AP converts it from an inhibitor to a promoter of RET degradation; the function limits the potency of GDNF on neuronal survival. The chain is E3 ubiquitin-protein ligase CBL-C (CBLC) from Homo sapiens (Human).